Here is a 297-residue protein sequence, read N- to C-terminus: Nucleotide-binding protein BMA10229_A1510 (297 aa).

8–15 provides a ligand contact to ATP; that stretch reads GISGSGKS. A GTP-binding site is contributed by 57–60; that stretch reads DARS.

It belongs to the RapZ-like family.

In terms of biological role, displays ATPase and GTPase activities. This Burkholderia mallei (strain NCTC 10229) protein is Nucleotide-binding protein BMA10229_A1510.